Here is a 357-residue protein sequence, read N- to C-terminus: Probable dual-specificity RNA methyltransferase RlmN (357 aa).

The active-site Proton acceptor is glutamate 95. The 235-residue stretch at 106-340 folds into the Radical SAM core domain; sequence NRDRHTVCVS…VSVREEKGTD (235 aa). Cysteines 113 and 345 form a disulfide. Cysteine 120, cysteine 124, and cysteine 127 together coordinate [4Fe-4S] cluster. Residues 172–173, serine 204, 227–229, and asparagine 302 contribute to the S-adenosyl-L-methionine site; these read GE and SLH. Catalysis depends on cysteine 345, which acts as the S-methylcysteine intermediate.

Belongs to the radical SAM superfamily. RlmN family. Requires [4Fe-4S] cluster as cofactor.

It is found in the cytoplasm. It carries out the reaction adenosine(2503) in 23S rRNA + 2 reduced [2Fe-2S]-[ferredoxin] + 2 S-adenosyl-L-methionine = 2-methyladenosine(2503) in 23S rRNA + 5'-deoxyadenosine + L-methionine + 2 oxidized [2Fe-2S]-[ferredoxin] + S-adenosyl-L-homocysteine. It catalyses the reaction adenosine(37) in tRNA + 2 reduced [2Fe-2S]-[ferredoxin] + 2 S-adenosyl-L-methionine = 2-methyladenosine(37) in tRNA + 5'-deoxyadenosine + L-methionine + 2 oxidized [2Fe-2S]-[ferredoxin] + S-adenosyl-L-homocysteine. In terms of biological role, specifically methylates position 2 of adenine 2503 in 23S rRNA and position 2 of adenine 37 in tRNAs. The polypeptide is Probable dual-specificity RNA methyltransferase RlmN (Desulfitobacterium hafniense (strain DSM 10664 / DCB-2)).